Reading from the N-terminus, the 318-residue chain is MVKPKIALIGGGQIGNSIAHLAAMRELGNVIMFDIKDGLAQGKCLDIAQAAPISNFDVQLCGSNDISCIAGADIVVVTAGIPRKPGMTREDLIEINARIMVTVAEGIKTHAPESIVIVLSNPLDAMVTLCQKITGFPTQRIMGMAGVLDSARFASFIAWELGVSVRDVNAMVLGGHGDAMVPIVRFANVNGIPALELLKNKYGDEDKARQVMAGLVERTQDAGGEVVHLLQTGSAFISPATSAIAMVEAVIHDQKRLLPVCAMLDGQFGISGYYVGVPCILGVGGVERIVEFELTEDEQALLDHSVGEVKKLVDSLPL.

NAD(+) contacts are provided by residues 10–15 (GGGQIG) and Asp34. Arg83 and Arg89 together coordinate substrate. NAD(+) contacts are provided by residues Asn96 and 119 to 121 (LSN). Residues Asn121 and Arg152 each coordinate substrate. Residue His176 is the Proton acceptor of the active site.

The protein belongs to the LDH/MDH superfamily. MDH type 3 family.

The enzyme catalyses (S)-malate + NAD(+) = oxaloacetate + NADH + H(+). Catalyzes the reversible oxidation of malate to oxaloacetate. The polypeptide is Malate dehydrogenase (Syntrophotalea carbinolica (strain DSM 2380 / NBRC 103641 / GraBd1) (Pelobacter carbinolicus)).